Here is a 121-residue protein sequence, read N- to C-terminus: UPF0295 protein BH0952 (121 aa).

Transmembrane regions (helical) follow at residues isoleucine 12–phenylalanine 32 and valine 41–isoleucine 61.

The protein belongs to the UPF0295 family.

The protein localises to the cell membrane. This Halalkalibacterium halodurans (strain ATCC BAA-125 / DSM 18197 / FERM 7344 / JCM 9153 / C-125) (Bacillus halodurans) protein is UPF0295 protein BH0952.